The following is a 195-amino-acid chain: TM2 domain-containing protein C41D11.9 (195 aa).

Positions 1 to 20 (MLHKILFLICLASFIPTIGS) are cleaved as a signal peptide. Over 21-136 (ISGTKDVKSK…NWSSGYSWTK (116 aa)) the chain is Extracellular. Residues N55, N93, and N127 are each glycosylated (N-linked (GlcNAc...) asparagine). Positions 131–179 (GYSWTKTMILSVVLGGFGADRFYLGLWKSAIGKLFSFGGLGVWTLVDVV) constitute a TM2 domain. Residues 137-157 (TMILSVVLGGFGADRFYLGLW) traverse the membrane as a helical segment. Topologically, residues 158 to 163 (KSAIGK) are cytoplasmic. The helical transmembrane segment at 164 to 184 (LFSFGGLGVWTLVDVVLIAVG) threads the bilayer. Residues 185–195 (YIKPYDGSMYI) lie on the Extracellular side of the membrane.

The protein belongs to the TM2 family.

It is found in the membrane. This Caenorhabditis elegans protein is TM2 domain-containing protein C41D11.9.